A 93-amino-acid chain; its full sequence is UPF0223 protein SAG0995 (93 aa).

The protein belongs to the UPF0223 family.

In Streptococcus agalactiae serotype V (strain ATCC BAA-611 / 2603 V/R), this protein is UPF0223 protein SAG0995.